The following is a 103-amino-acid chain: NAD(P)H-quinone oxidoreductase subunit 4L, organellar chromatophore (103 aa).

The next 3 membrane-spanning stretches (helical) occupy residues 3–23 (IMLEAYLTLAAVLFCIGVWGL), 32–52 (VLMSIELMLNAVNINLMAFSN), and 63–83 (VFAIFVITVAAAEAAVGLAIL).

It belongs to the complex I subunit 4L family. As to quaternary structure, NDH is composed of at least 16 different subunits, 5 of which are encoded in the nucleus.

It is found in the plastid. It localises to the organellar chromatophore thylakoid membrane. The catalysed reaction is a plastoquinone + NADH + (n+1) H(+)(in) = a plastoquinol + NAD(+) + n H(+)(out). It catalyses the reaction a plastoquinone + NADPH + (n+1) H(+)(in) = a plastoquinol + NADP(+) + n H(+)(out). Functionally, NDH shuttles electrons from NAD(P)H:plastoquinone, via FMN and iron-sulfur (Fe-S) centers, to quinones in the photosynthetic chain and possibly in a chloroplast respiratory chain. The immediate electron acceptor for the enzyme in this species is believed to be plastoquinone. Couples the redox reaction to proton translocation, and thus conserves the redox energy in a proton gradient. The sequence is that of NAD(P)H-quinone oxidoreductase subunit 4L, organellar chromatophore from Paulinella chromatophora.